Reading from the N-terminus, the 388-residue chain is Succinate--CoA ligase [ADP-forming] subunit beta (388 aa).

ATP contacts are provided by residues Lys-46, 53–55 (GRG), Glu-99, Cys-102, and Glu-107. Residues Asn-199 and Asp-213 each contribute to the Mg(2+) site. Residues Asn-264 and 321–323 (GIV) contribute to the substrate site.

Belongs to the succinate/malate CoA ligase beta subunit family. In terms of assembly, heterotetramer of two alpha and two beta subunits. Mg(2+) is required as a cofactor.

The enzyme catalyses succinate + ATP + CoA = succinyl-CoA + ADP + phosphate. It carries out the reaction GTP + succinate + CoA = succinyl-CoA + GDP + phosphate. The protein operates within carbohydrate metabolism; tricarboxylic acid cycle; succinate from succinyl-CoA (ligase route): step 1/1. In terms of biological role, succinyl-CoA synthetase functions in the citric acid cycle (TCA), coupling the hydrolysis of succinyl-CoA to the synthesis of either ATP or GTP and thus represents the only step of substrate-level phosphorylation in the TCA. The beta subunit provides nucleotide specificity of the enzyme and binds the substrate succinate, while the binding sites for coenzyme A and phosphate are found in the alpha subunit. This Actinobacillus pleuropneumoniae serotype 3 (strain JL03) protein is Succinate--CoA ligase [ADP-forming] subunit beta.